The primary structure comprises 217 residues: Probable GTP-binding protein EngB (217 aa).

Residues Gly32–Thr205 form the EngB-type G domain. Residues Gly40–Ser47, Gly67–Leu71, Asp85–Gly88, Thr152–Asp155, and Val184–Asn186 contribute to the GTP site. Residues Ser47 and Thr69 each contribute to the Mg(2+) site.

The protein belongs to the TRAFAC class TrmE-Era-EngA-EngB-Septin-like GTPase superfamily. EngB GTPase family. Mg(2+) serves as cofactor.

In terms of biological role, necessary for normal cell division and for the maintenance of normal septation. This is Probable GTP-binding protein EngB from Leptospira interrogans serogroup Icterohaemorrhagiae serovar copenhageni (strain Fiocruz L1-130).